A 221-amino-acid chain; its full sequence is Putative efflux system component YhbJ (221 aa).

The chain crosses the membrane as a helical span at residues 17–37 (LILTNIIGLIVVLAIIAGGAY).

Belongs to the membrane fusion protein (MFP) (TC 8.A.1) family.

The protein localises to the cell membrane. This is Putative efflux system component YhbJ (yhbJ) from Bacillus subtilis (strain 168).